The primary structure comprises 273 residues: Shikimate dehydrogenase (NADP(+)) (273 aa).

Shikimate-binding positions include 14 to 16 (SKS) and Thr-61. Lys-65 (proton acceptor) is an active-site residue. Residues Asn-86 and Asp-102 each contribute to the shikimate site. Residues 126-130 (GAGGA), 150-155 (NRTVAK), and Met-213 each bind NADP(+). Residue Tyr-215 participates in shikimate binding. Position 237 (Gly-237) interacts with NADP(+).

The protein belongs to the shikimate dehydrogenase family. As to quaternary structure, homodimer.

It catalyses the reaction shikimate + NADP(+) = 3-dehydroshikimate + NADPH + H(+). It functions in the pathway metabolic intermediate biosynthesis; chorismate biosynthesis; chorismate from D-erythrose 4-phosphate and phosphoenolpyruvate: step 4/7. In terms of biological role, involved in the biosynthesis of the chorismate, which leads to the biosynthesis of aromatic amino acids. Catalyzes the reversible NADPH linked reduction of 3-dehydroshikimate (DHSA) to yield shikimate (SA). This Tolumonas auensis (strain DSM 9187 / NBRC 110442 / TA 4) protein is Shikimate dehydrogenase (NADP(+)).